Here is a 453-residue protein sequence, read N- to C-terminus: tRNA modification GTPase MnmE (453 aa).

(6S)-5-formyl-5,6,7,8-tetrahydrofolate-binding residues include R22, E79, and K119. A TrmE-type G domain is found at 215 to 376 (GMKVVIAGRP…LRQHLKECMG (162 aa)). N225 is a binding site for K(+). Residues 225-230 (NAGKSS), 244-250 (TDIAGTT), 269-272 (DTAG), and 334-337 (NKAD) each bind GTP. S229 serves as a coordination point for Mg(2+). K(+) contacts are provided by T244, I246, and T249. T250 contributes to the Mg(2+) binding site. K453 serves as a coordination point for (6S)-5-formyl-5,6,7,8-tetrahydrofolate.

It belongs to the TRAFAC class TrmE-Era-EngA-EngB-Septin-like GTPase superfamily. TrmE GTPase family. In terms of assembly, homodimer. Heterotetramer of two MnmE and two MnmG subunits. It depends on K(+) as a cofactor.

The protein localises to the cytoplasm. In terms of biological role, exhibits a very high intrinsic GTPase hydrolysis rate. Involved in the addition of a carboxymethylaminomethyl (cmnm) group at the wobble position (U34) of certain tRNAs, forming tRNA-cmnm(5)s(2)U34. The protein is tRNA modification GTPase MnmE of Vibrio cholerae serotype O1 (strain ATCC 39315 / El Tor Inaba N16961).